The chain runs to 124 residues: MKTCHIINRVGLSGVALLLTVSFTVSAVSENKRVDKFISCDNLTKSQIAAQVKRDFLQNRINHWSEDRKQLGTSKPVVWVKAENITGDKEILKIPLTVRGSKRDKDYRVVVDCQQNTISYSELK.

A signal peptide spans 1–27 (MKTCHIINRVGLSGVALLLTVSFTVSA). Positions 36-123 (KFISCDNLTK…QQNTISYSEL (88 aa)) constitute a YebF/Cmi domain. Cysteines 40 and 113 form a disulfide.

This sequence belongs to the YebF family.

It is found in the secreted. In Photorhabdus laumondii subsp. laumondii (strain DSM 15139 / CIP 105565 / TT01) (Photorhabdus luminescens subsp. laumondii), this protein is Protein YebF.